The following is a 345-amino-acid chain: S-adenosylmethionine:tRNA ribosyltransferase-isomerase (345 aa).

Belongs to the QueA family. Monomer.

The protein resides in the cytoplasm. The catalysed reaction is 7-aminomethyl-7-carbaguanosine(34) in tRNA + S-adenosyl-L-methionine = epoxyqueuosine(34) in tRNA + adenine + L-methionine + 2 H(+). Its pathway is tRNA modification; tRNA-queuosine biosynthesis. Its function is as follows. Transfers and isomerizes the ribose moiety from AdoMet to the 7-aminomethyl group of 7-deazaguanine (preQ1-tRNA) to give epoxyqueuosine (oQ-tRNA). This Anaeromyxobacter sp. (strain Fw109-5) protein is S-adenosylmethionine:tRNA ribosyltransferase-isomerase.